The following is a 347-amino-acid chain: Extracellular exo-alpha-(1-&gt;5)-L-arabinofuranosidase ArbA (347 aa).

An N-terminal signal peptide occupies residues 1-31 (MPTHHPITRQHWHHSWLSALALLCASLACGA). D35 lines the substrate pocket. D38 functions as the Proton acceptor in the catalytic mechanism. Substrate contacts are provided by residues 90 to 92 (DGH), 115 to 116 (GK), N155, S175, and E221. E221 functions as the Proton donor in the catalytic mechanism. Ca(2+) is bound at residue H291. Q316 is a substrate binding site.

The protein belongs to the glycosyl hydrolase 43 family. In terms of assembly, homodimer.

Its subcellular location is the secreted. The catalysed reaction is Hydrolysis of terminal non-reducing alpha-L-arabinofuranoside residues in alpha-L-arabinosides.. Its pathway is glycan metabolism; L-arabinan degradation. In terms of biological role, involved in the degradation of arabinan and is a key enzyme in the complete degradation of the plant cell wall. Catalyzes the cleavage of the terminal alpha-(1-&gt;5)-arabinofuranosyl bonds of linear arabinan and carboxymethylarabinan to produce almost exclusively arabinotriose. The polypeptide is Extracellular exo-alpha-(1-&gt;5)-L-arabinofuranosidase ArbA (arbA) (Cellvibrio japonicus (strain Ueda107) (Pseudomonas fluorescens subsp. cellulosa)).